A 195-amino-acid chain; its full sequence is Imidazoleglycerol-phosphate dehydratase (195 aa).

Belongs to the imidazoleglycerol-phosphate dehydratase family.

It localises to the cytoplasm. It catalyses the reaction D-erythro-1-(imidazol-4-yl)glycerol 3-phosphate = 3-(imidazol-4-yl)-2-oxopropyl phosphate + H2O. The protein operates within amino-acid biosynthesis; L-histidine biosynthesis; L-histidine from 5-phospho-alpha-D-ribose 1-diphosphate: step 6/9. This Geobacillus sp. (strain WCH70) protein is Imidazoleglycerol-phosphate dehydratase.